A 578-amino-acid polypeptide reads, in one-letter code: Type I restriction enzyme MjaVIII methylase subunit (578 aa).

S-adenosyl-L-methionine contacts are provided by residues 250–255 (EVYTPI), 280–282 (SGS), E303, and 332–333 (DS).

It belongs to the N(4)/N(6)-methyltransferase family. As to quaternary structure, the type I restriction/modification system is composed of three polypeptides R, M and S.

It catalyses the reaction a 2'-deoxyadenosine in DNA + S-adenosyl-L-methionine = an N(6)-methyl-2'-deoxyadenosine in DNA + S-adenosyl-L-homocysteine + H(+). Functionally, the subtype gamma methyltransferase (M) subunit of a type I restriction enzyme. The M and S subunits together form a methyltransferase (MTase) that methylates A-2 on the top and A-3 on the bottom strand of the sequence 5'-GAYN(5)GTAA-3'. In the presence of the R subunit the complex can also act as an endonuclease, binding to the same target sequence but cutting the DNA some distance from this site. Whether the DNA is cut or modified depends on the methylation state of the target sequence. When the target site is unmodified, the DNA is cut. When the target site is hemimethylated, the complex acts as a maintenance MTase modifying the DNA so that both strands become methylated. After locating a non-methylated recognition site, the enzyme complex serves as a molecular motor that translocates DNA in an ATP-dependent manner until a collision occurs that triggers cleavage. In Methanocaldococcus jannaschii (strain ATCC 43067 / DSM 2661 / JAL-1 / JCM 10045 / NBRC 100440) (Methanococcus jannaschii), this protein is Type I restriction enzyme MjaVIII methylase subunit.